A 649-amino-acid chain; its full sequence is Acetyl-coenzyme A synthetase (649 aa).

CoA contacts are provided by residues Arg-191–Arg-194, Thr-312, and Asn-336. ATP-binding positions include Gly-388–Pro-390, Asp-412–Thr-417, Asp-501, and Arg-516. Residue Ser-524 participates in CoA binding. Residue Arg-527 participates in ATP binding. Val-538, His-540, and Val-543 together coordinate Mg(2+). Arg-585 is a binding site for CoA. The residue at position 610 (Lys-610) is an N6-acetyllysine.

The protein belongs to the ATP-dependent AMP-binding enzyme family. It depends on Mg(2+) as a cofactor. In terms of processing, acetylated. Deacetylation by the SIR2-homolog deacetylase activates the enzyme.

It carries out the reaction acetate + ATP + CoA = acetyl-CoA + AMP + diphosphate. Functionally, catalyzes the conversion of acetate into acetyl-CoA (AcCoA), an essential intermediate at the junction of anabolic and catabolic pathways. AcsA undergoes a two-step reaction. In the first half reaction, AcsA combines acetate with ATP to form acetyl-adenylate (AcAMP) intermediate. In the second half reaction, it can then transfer the acetyl group from AcAMP to the sulfhydryl group of CoA, forming the product AcCoA. The polypeptide is Acetyl-coenzyme A synthetase (Marinobacter nauticus (strain ATCC 700491 / DSM 11845 / VT8) (Marinobacter aquaeolei)).